A 314-amino-acid chain; its full sequence is Cytochrome f (314 aa).

A signal peptide spans 1 to 30; it reads MATNKFFKSLLFTLTIAISSFGFCVENSSA. Residues tyrosine 31, cysteine 51, cysteine 54, and histidine 55 each coordinate heme. A helical membrane pass occupies residues 280–300; the sequence is ILGYLAFCFCLLLTQVLLVLK.

This sequence belongs to the cytochrome f family. The 4 large subunits of the cytochrome b6-f complex are cytochrome b6, subunit IV (17 kDa polypeptide, petD), cytochrome f and the Rieske protein, while the 4 small subunits are PetG, PetL, PetM and PetN. The complex functions as a dimer. Heme serves as cofactor.

It is found in the plastid. It localises to the chloroplast thylakoid membrane. In terms of biological role, component of the cytochrome b6-f complex, which mediates electron transfer between photosystem II (PSII) and photosystem I (PSI), cyclic electron flow around PSI, and state transitions. In Thalassiosira pseudonana (Marine diatom), this protein is Cytochrome f.